Reading from the N-terminus, the 396-residue chain is Phosphopentomutase (396 aa).

Residues Asp-13, Asp-288, His-293, Asp-329, His-330, and His-341 each contribute to the Mn(2+) site.

This sequence belongs to the phosphopentomutase family. The cofactor is Mn(2+).

It localises to the cytoplasm. It catalyses the reaction 2-deoxy-alpha-D-ribose 1-phosphate = 2-deoxy-D-ribose 5-phosphate. The enzyme catalyses alpha-D-ribose 1-phosphate = D-ribose 5-phosphate. Its pathway is carbohydrate degradation; 2-deoxy-D-ribose 1-phosphate degradation; D-glyceraldehyde 3-phosphate and acetaldehyde from 2-deoxy-alpha-D-ribose 1-phosphate: step 1/2. Isomerase that catalyzes the conversion of deoxy-ribose 1-phosphate (dRib-1-P) and ribose 1-phosphate (Rib-1-P) to deoxy-ribose 5-phosphate (dRib-5-P) and ribose 5-phosphate (Rib-5-P), respectively. The protein is Phosphopentomutase of Clostridium beijerinckii (strain ATCC 51743 / NCIMB 8052) (Clostridium acetobutylicum).